Reading from the N-terminus, the 240-residue chain is Ribosomal RNA large subunit methyltransferase E (240 aa).

Gly residues predominate over residues 1 to 20 (MSKAGGNKGGVKTGGRGGAG). A disordered region spans residues 1 to 27 (MSKAGGNKGGVKTGGRGGAGSSNLQVR). Residues Gly-92, Trp-94, Asp-115, Asp-131, and Asp-155 each contribute to the S-adenosyl-L-methionine site. Lys-195 acts as the Proton acceptor in catalysis.

This sequence belongs to the class I-like SAM-binding methyltransferase superfamily. RNA methyltransferase RlmE family.

The protein localises to the cytoplasm. The catalysed reaction is uridine(2552) in 23S rRNA + S-adenosyl-L-methionine = 2'-O-methyluridine(2552) in 23S rRNA + S-adenosyl-L-homocysteine + H(+). Specifically methylates the uridine in position 2552 of 23S rRNA at the 2'-O position of the ribose in the fully assembled 50S ribosomal subunit. The polypeptide is Ribosomal RNA large subunit methyltransferase E (Brucella anthropi (strain ATCC 49188 / DSM 6882 / CCUG 24695 / JCM 21032 / LMG 3331 / NBRC 15819 / NCTC 12168 / Alc 37) (Ochrobactrum anthropi)).